A 356-amino-acid chain; its full sequence is Carbohydrate sulfotransferase 10 (356 aa).

The Cytoplasmic segment spans residues 1–6 (MHHQWL). The chain crosses the membrane as a helical; Signal-anchor for type II membrane protein span at residues 7–27 (LLAACFWVIFMFMVASKFITL). Residues 28-356 (TFKDPDVYSA…GYQKPDFLLN (329 aa)) are Lumenal-facing. N-linked (GlcNAc...) asparagine glycosylation is present at N99. 3'-phosphoadenylyl sulfate contacts are provided by residues 127–133 (PKVGNTQ) and 189–197 (RDPFERLIS). N-linked (GlcNAc...) asparagine glycans are attached at residues N228 and N316.

The protein belongs to the sulfotransferase 2 family. As to expression, in fetal tissues, it is predominantly expressed in brain, and weakly expressed in lung, kidney and liver. In adult, it is highly expressed in brain, testis, ovary, expressed at intermediate level in heart, pancreas, skeletal muscle, spleen and thymus, and weakly expressed in other tissues. In brain, it is expressed at higher level in the frontal lobe.

It localises to the golgi apparatus membrane. It catalyses the reaction 3-O-{beta-D-GlcA-(1-&gt;[3)-alpha-D-Xyl-(1-&gt;3)-beta-D-GlcA-(1-&gt;](n)-4)-beta-D-Xyl-(1-&gt;4)-Rib-ol-P-Rib-ol-P-3-beta-D-GalNAc-(1-&gt;3)-beta-D-GlcNAc-(1-&gt;4)-O-6-P-alpha-D-Man}-L-Thr-[protein] + 3'-phosphoadenylyl sulfate = 3-O-{O-3-S-beta-D-GlcA-(1-&gt;[3)-alpha-D-Xyl-(1-&gt;3)-beta-D-GlcA-(1-&gt;](n)-4)-beta-D-Xyl-(1-&gt;4)-Rib-ol-P-Rib-ol-P-3-beta-D-GalNAc-(1-&gt;3)-beta-D-GlcNAc-(1-&gt;4)-O-6-P-alpha-D-Man}-L-Thr-[protein] + adenosine 3',5'-bisphosphate + H(+). The enzyme catalyses 17beta-estradiol 3-O-(beta-D-glucuronate) + 3'-phosphoadenylyl sulfate = 17beta-estradiol 3-O-(3-sulfo-beta-D-glucuronate) + adenosine 3',5'-bisphosphate + H(+). It carries out the reaction 17beta-estradiol 3-O-(beta-D-glucuronate) 17-sulfate + 3'-phosphoadenylyl sulfate = 17beta-estradiol 3-O-(3-sulfo-beta-D-glucuronate) 17-sulfate + adenosine 3',5'-bisphosphate + H(+). The catalysed reaction is 17beta-estradiol 17-O-(beta-D-glucuronate) + 3'-phosphoadenylyl sulfate = 17beta-estradiol 17-O-(3-sulfo-beta-D-glucuronate) + adenosine 3',5'-bisphosphate + H(+). It catalyses the reaction 16alpha,17beta-estriol 3-O-(beta-D-glucuronate) + 3'-phosphoadenylyl sulfate = 16alpha,17beta-estriol 3-O-(3-sulfo-beta-D-glucuronate) + adenosine 3',5'-bisphosphate + H(+). The enzyme catalyses 16alpha,17beta-estriol 16-O-(beta-D-glucuronate) + 3'-phosphoadenylyl sulfate = 16alpha,17beta-estriol 16-O-(3-sulfo-beta-D-glucuronate) + adenosine 3',5'-bisphosphate + H(+). It carries out the reaction 16alpha,17beta-estriol 17-O-(beta-D-glucuronate) + 3'-phosphoadenylyl sulfate = 16alpha,17beta-estriol 17-O-(3-sulfo-beta-D-glucuronate) + adenosine 3',5'-bisphosphate + H(+). The catalysed reaction is estrone 3-O-(beta-D-glucuronate) + 3'-phosphoadenylyl sulfate = estrone 3-O-(3-sulfo-beta-D-glucuronate) + adenosine 3',5'-bisphosphate + H(+). It catalyses the reaction 3alpha,20alpha-dihydroxy-5beta-pregnane 3-O-(beta-D-glucuronate) + 3'-phosphoadenylyl sulfate = 3alpha,20alpha-dihydroxy-5beta-pregnane 3-O-(3-sulfo-beta-D-glucuronate) + adenosine 3',5'-bisphosphate + H(+). The enzyme catalyses testosterone 17-O-(beta-D-glucuronate) + 3'-phosphoadenylyl sulfate = testosterone 17-O-(3-sulfo-beta-D-glucuronate) + adenosine 3',5'-bisphosphate + H(+). It carries out the reaction 3beta-androst-5-en-17-one 3-O-(beta-D-glucuronate) + 3'-phosphoadenylyl sulfate = 3beta-androst-5-en-17-one 3-O-(3-sulfo-beta-D-glucuronate) + adenosine 3',5'-bisphosphate + H(+). The catalysed reaction is 3alpha,17alpha-dihydroxy-5beta-androstane-11-one-17beta-carboxylate 3-O-(beta-D-glucuronate) + 3'-phosphoadenylyl sulfate = 3alpha,17alpha-dihydroxy-5beta-androstane-11-one-17beta-carboxylate 3-O-(3-sulfo-beta-D-glucuronate) + adenosine 3',5'-bisphosphate + H(+). It catalyses the reaction 3alpha-hydroxyetiocholan-17-one 3-O-(beta-D-glucuronate) + 3'-phosphoadenylyl sulfate = 3alpha-hydroxyetiocholan-17-one 3-O-(3-sulfo-beta-D-glucuronate) + adenosine 3',5'-bisphosphate + H(+). Its pathway is steroid metabolism. It participates in protein modification; carbohydrate sulfation. In terms of biological role, catalyzes the transfer of sulfate from 3'-phosphoadenylyl sulfate (PAPS) to position 3 of terminal glucuronic acid of both protein- and lipid-linked oligosaccharides. Participates in biosynthesis of HNK-1 carbohydrate structure 3-O-sulfo-beta-D-GlcA-(1-&gt;3)-beta-D-Gal-(1-&gt;4)-D-GlcNAc-R, a sulfated glucuronyl-lactosaminyl residue carried by many neural recognition molecules, which is involved in cell interactions during ontogenetic development and in synaptic plasticity in the adult. May be indirectly involved in synapse plasticity of the hippocampus, via its role in HNK-1 biosynthesis. Sulfates terminal glucuronyl residue of the laminin globular (LG)-domain binding epitope on DAG1/alpha-dystroglycan and prevents further polymerization by LARGE1 glycosyltransferase. Likely defines the chain length of LG epitope, conferring binding specificity to extracellular matrix components. Plays a role in down-regulating the steroid hormones. Sulfates glucuronidated estrogens and androgens with an impact in hormone cycle and fertility. Has a preference for glucuronyl moiety at the 3-hydroxyl group of a sterol ring rather than the 17-hydroxyl group, showing high catalytic efficiency for 17beta-estradiol 3-O-(beta-D-glucuronate) and dehydroepiandrosterone 3-O-(beta-D-glucuronate) hormones. The polypeptide is Carbohydrate sulfotransferase 10 (Homo sapiens (Human)).